A 290-amino-acid chain; its full sequence is Glyceraldehyde-3-phosphate dehydrogenase (290 aa).

Residues Asp13 and Arg58 each coordinate NAD(+). D-glyceraldehyde 3-phosphate contacts are provided by residues 129–131 (SCT), Thr160, 189–190 (TG), and Arg212. Cys130 acts as the Nucleophile in catalysis.

Belongs to the glyceraldehyde-3-phosphate dehydrogenase family. Homotetramer.

The protein localises to the cytoplasm. The catalysed reaction is D-glyceraldehyde 3-phosphate + phosphate + NAD(+) = (2R)-3-phospho-glyceroyl phosphate + NADH + H(+). Its pathway is carbohydrate degradation; glycolysis; pyruvate from D-glyceraldehyde 3-phosphate: step 1/5. The sequence is that of Glyceraldehyde-3-phosphate dehydrogenase (GPD) from Lactarius deterrimus (False saffron milkcap).